A 273-amino-acid polypeptide reads, in one-letter code: Putative phosphoenolpyruvate synthase regulatory protein (273 aa).

An ADP-binding site is contributed by 154 to 161 (GVSRSGKT).

Belongs to the pyruvate, phosphate/water dikinase regulatory protein family. PSRP subfamily.

It catalyses the reaction [pyruvate, water dikinase] + ADP = [pyruvate, water dikinase]-phosphate + AMP + H(+). It carries out the reaction [pyruvate, water dikinase]-phosphate + phosphate + H(+) = [pyruvate, water dikinase] + diphosphate. Its function is as follows. Bifunctional serine/threonine kinase and phosphorylase involved in the regulation of the phosphoenolpyruvate synthase (PEPS) by catalyzing its phosphorylation/dephosphorylation. This is Putative phosphoenolpyruvate synthase regulatory protein from Neisseria gonorrhoeae (strain ATCC 700825 / FA 1090).